Here is a 215-residue protein sequence, read N- to C-terminus: Pyrrolidone-carboxylate peptidase (215 aa).

Catalysis depends on residues Glu-80, Cys-143, and His-167.

It belongs to the peptidase C15 family. As to quaternary structure, homotetramer.

It localises to the cytoplasm. The catalysed reaction is Release of an N-terminal pyroglutamyl group from a polypeptide, the second amino acid generally not being Pro.. Removes 5-oxoproline from various penultimate amino acid residues except L-proline. The sequence is that of Pyrrolidone-carboxylate peptidase from Bacillus cereus (strain 03BB102).